The sequence spans 507 residues: Probable cytosol aminopeptidase (507 aa).

Positions 254 and 259 each coordinate Mn(2+). K266 is a catalytic residue. Residues D277, D336, and E338 each coordinate Mn(2+). R340 is a catalytic residue. The interval 486–507 is disordered; that stretch reads PRKAQPKARSAKRSKPVSRTRA. The segment covering 489-507 has biased composition (basic residues); it reads AQPKARSAKRSKPVSRTRA.

This sequence belongs to the peptidase M17 family. It depends on Mn(2+) as a cofactor.

It localises to the cytoplasm. It catalyses the reaction Release of an N-terminal amino acid, Xaa-|-Yaa-, in which Xaa is preferably Leu, but may be other amino acids including Pro although not Arg or Lys, and Yaa may be Pro. Amino acid amides and methyl esters are also readily hydrolyzed, but rates on arylamides are exceedingly low.. It carries out the reaction Release of an N-terminal amino acid, preferentially leucine, but not glutamic or aspartic acids.. In terms of biological role, presumably involved in the processing and regular turnover of intracellular proteins. Catalyzes the removal of unsubstituted N-terminal amino acids from various peptides. This is Probable cytosol aminopeptidase from Polaromonas sp. (strain JS666 / ATCC BAA-500).